The chain runs to 254 residues: 3-oxo-5-alpha-steroid 4-dehydrogenase 2 (254 aa).

4 helical membrane-spanning segments follow: residues 8–28 (VPVL…LCFG), 72–92 (PRSL…AHYF), 146–166 (FSVG…SDCM), and 206–226 (LATW…FLGM).

This sequence belongs to the steroid 5-alpha reductase family.

It localises to the microsome membrane. The protein localises to the endoplasmic reticulum membrane. The enzyme catalyses a 3-oxo-5alpha-steroid + NADP(+) = a 3-oxo-Delta(4)-steroid + NADPH + H(+). It catalyses the reaction 17beta-hydroxy-5alpha-androstan-3-one + NADP(+) = testosterone + NADPH + H(+). It carries out the reaction 5alpha-pregnane-3,20-dione + NADP(+) = progesterone + NADPH + H(+). Converts testosterone (T) into 5-alpha-dihydrotestosterone (DHT) and progesterone or corticosterone into their corresponding 5-alpha-3-oxosteroids. It plays a central role in sexual differentiation and androgen physiology. This is 3-oxo-5-alpha-steroid 4-dehydrogenase 2 (Srd5a2) from Mus musculus (Mouse).